The chain runs to 363 residues: AA9 family lytic polysaccharide monooxygenase I (363 aa).

The signal sequence occupies residues 1-19; that stretch reads MSLFKFAAFVLGTAGSVAG. The Cu(2+) site is built by histidine 20 and histidine 105. 2 cysteine pairs are disulfide-bonded: cysteine 75–cysteine 197 and cysteine 116–cysteine 120. Histidine 183 and glutamine 192 together coordinate O2. Residue tyrosine 194 coordinates Cu(2+). Polar residues predominate over residues 248 to 257; it reads GSDSNTATSG. 2 disordered regions span residues 248-270 and 298-363; these read GSDSNTATSGASPPSTNFSPTTT and SVSY…RTQS. A compositionally biased stretch (low complexity) spans 258-270; it reads ASPPSTNFSPTTT. A compositionally biased stretch (polar residues) spans 298-307; the sequence is SVSYSQTPWP. Over residues 308–329 the composition is skewed to low complexity; it reads SSTATEATSASSSAGGSNNGHT. Positions 342–354 are enriched in basic residues; the sequence is TGKKRSRLNRRRM.

It belongs to the polysaccharide monooxygenase AA9 family. Cu(2+) is required as a cofactor.

It localises to the secreted. It carries out the reaction [(1-&gt;4)-beta-D-glucosyl]n+m + reduced acceptor + O2 = 4-dehydro-beta-D-glucosyl-[(1-&gt;4)-beta-D-glucosyl]n-1 + [(1-&gt;4)-beta-D-glucosyl]m + acceptor + H2O.. Functionally, lytic polysaccharide monooxygenase (LPMO) that depolymerizes crystalline and amorphous polysaccharides via the oxidation of scissile alpha- or beta-(1-4)-glycosidic bonds, yielding C1 or C4 oxidation products. Catalysis by LPMOs requires the reduction of the active-site copper from Cu(II) to Cu(I) by a reducing agent and H(2)O(2) or O(2) as a cosubstrate. This is AA9 family lytic polysaccharide monooxygenase I from Emericella nidulans (strain FGSC A4 / ATCC 38163 / CBS 112.46 / NRRL 194 / M139) (Aspergillus nidulans).